The primary structure comprises 155 residues: uncharacterized protein (155 aa).

The region spanning 37-140 is the SCP domain; sequence IAELRKKLNL…GGYRLKTTDN (104 aa).

This is an uncharacterized protein from Borreliella burgdorferi (strain ATCC 35210 / DSM 4680 / CIP 102532 / B31) (Borrelia burgdorferi).